The chain runs to 188 residues: Elongation factor P (188 aa).

This sequence belongs to the elongation factor P family.

It is found in the cytoplasm. The protein operates within protein biosynthesis; polypeptide chain elongation. Functionally, involved in peptide bond synthesis. Stimulates efficient translation and peptide-bond synthesis on native or reconstituted 70S ribosomes in vitro. Probably functions indirectly by altering the affinity of the ribosome for aminoacyl-tRNA, thus increasing their reactivity as acceptors for peptidyl transferase. The chain is Elongation factor P from Methylobacterium radiotolerans (strain ATCC 27329 / DSM 1819 / JCM 2831 / NBRC 15690 / NCIMB 10815 / 0-1).